A 168-amino-acid polypeptide reads, in one-letter code: Cilia- and flagella-associated protein 276 (168 aa).

2 disordered regions span residues 35-61 (AHLA…RDTF) and 149-168 (HTAA…FFST). A compositionally biased stretch (polar residues) spans 38 to 55 (AQQQDPWSRLSSTPTATS).

In terms of assembly, microtubule inner protein component of sperm flagellar doublet microtubules. In terms of tissue distribution, predominantly expressed in nervous system tissues, such as the spinal cord, cerebrum, cerebellum, and sciatic nerve.

The protein resides in the cytoplasm. The protein localises to the cytoskeleton. It localises to the cilium axoneme. Its subcellular location is the flagellum axoneme. In terms of biological role, microtubule inner protein (MIP) part of the dynein-decorated doublet microtubules (DMTs) in cilia axoneme, which is required for motile cilia beating. May play an important role for the maintenance of myelin-axon integrity. May affect intracellular Ca(2+) homeostasis. The sequence is that of Cilia- and flagella-associated protein 276 from Mus musculus (Mouse).